Here is a 92-residue protein sequence, read N- to C-terminus: Conotoxin Cal22f (92 aa).

The first 24 residues, 1-24, serve as a signal peptide directing secretion; the sequence is MMSTKGITLFLCLLLLALATSVNG. A propeptide spanning residues 25–44 is cleaved from the precursor; it reads GQGTRRSRMTRALHGGRPSA.

Post-translationally, contains 4 disulfide bonds. As to expression, expressed by the venom duct.

The protein resides in the secreted. Functionally, probable neurotoxin with unknown target. Possibly targets ion channels. The polypeptide is Conotoxin Cal22f (Californiconus californicus (California cone)).